We begin with the raw amino-acid sequence, 503 residues long: Cytochrome P450 3A25 (503 aa).

Heme is bound at residue cysteine 442.

Belongs to the cytochrome P450 family. Requires heme as cofactor.

Its subcellular location is the endoplasmic reticulum membrane. It is found in the microsome membrane. It carries out the reaction an organic molecule + reduced [NADPH--hemoprotein reductase] + O2 = an alcohol + oxidized [NADPH--hemoprotein reductase] + H2O + H(+). Its function is as follows. Cytochromes P450 are a group of heme-thiolate monooxygenases. In liver microsomes, this enzyme is involved in an NADPH-dependent electron transport pathway. It oxidizes a variety of structurally unrelated compounds, including steroids, fatty acids, and xenobiotics. The sequence is that of Cytochrome P450 3A25 (Cyp3a25) from Mus musculus (Mouse).